A 116-amino-acid polypeptide reads, in one-letter code: Beta-2-microglobulin (116 aa).

An N-terminal signal peptide occupies residues 1 to 19 (MRAIITFALFCVLYVTVQG). Positions 24–110 (PKVQVYSHFP…VRHMNNKNIY (87 aa)) constitute an Ig-like C1-type domain. The cysteines at positions 44 and 99 are disulfide-linked.

It belongs to the beta-2-microglobulin family. In terms of assembly, heterodimer of an alpha chain and a beta chain. Beta-2-microglobulin is the beta-chain of major histocompatibility complex class I molecules.

It is found in the secreted. Its function is as follows. Component of the class I major histocompatibility complex (MHC). Involved in the presentation of peptide antigens to the immune system. This Cyprinus carpio (Common carp) protein is Beta-2-microglobulin (b2m).